The primary structure comprises 160 residues: Protein-export protein SecB (160 aa).

Belongs to the SecB family. Homotetramer, a dimer of dimers. One homotetramer interacts with 1 SecA dimer.

Its subcellular location is the cytoplasm. One of the proteins required for the normal export of preproteins out of the cell cytoplasm. It is a molecular chaperone that binds to a subset of precursor proteins, maintaining them in a translocation-competent state. It also specifically binds to its receptor SecA. The polypeptide is Protein-export protein SecB (Rhodospirillum rubrum (strain ATCC 11170 / ATH 1.1.1 / DSM 467 / LMG 4362 / NCIMB 8255 / S1)).